Consider the following 457-residue polypeptide: Multidrug resistance protein MdtK (457 aa).

The Cytoplasmic portion of the chain corresponds to 1–10 (MQKYTSEARQ). Residues 11 to 31 (LLALAIPVILAQVAQTAMGFV) traverse the membrane as a helical segment. The Extracellular segment spans residues 32–52 (DTVMAGGYSATDMAAVAIGTS). A helical membrane pass occupies residues 53–73 (IWLPAILFGHGLLLALTPVIA). Topologically, residues 74-92 (QLNGSGRRERIAHQVRQGF) are cytoplasmic. The chain crosses the membrane as a helical span at residues 93–113 (WLAGFVSVLVMIVLWNAGYII). The Extracellular portion of the chain corresponds to 114 to 126 (RSMHNIDPALADK). The helical transmembrane segment at 127–147 (AVGYLRALLWGAPGYLFFQVA) threads the bilayer. Topologically, residues 148 to 159 (RNQCEGLAKTKP) are cytoplasmic. A helical transmembrane segment spans residues 160-180 (GMVMGFLGLLVNIPVNYIFIY). The Extracellular portion of the chain corresponds to 181–187 (GHFGMPE). Residues 188–208 (LGGIGCGVATAAVYWVMFIAM) form a helical membrane-spanning segment. Residues 209 to 242 (LSYIKHARSMRDIRNEKGFGKPDSVVMKRLIQLG) are Cytoplasmic-facing. Residues 243-263 (LPIALALFFEVTLFAVVALLV) traverse the membrane as a helical segment. At 264–275 (SPLGIVDVAGHQ) the chain is on the extracellular side. The helical transmembrane segment at 276 to 296 (IALNFSSLMFVLPMSLAAAVT) threads the bilayer. The Cytoplasmic portion of the chain corresponds to 297-313 (IRVGYRLGQGSTLDAQT). Residues 314–334 (AARTGLGVGICMAVVTAIFTV) form a helical membrane-spanning segment. Over 335 to 349 (TLRKHIALLYNDNPE) the chain is Extracellular. A helical membrane pass occupies residues 350 to 370 (VVALAAQLMLLAAVYQISDSI). Residues 371 to 386 (QIIGSGILRGYKDTRS) are Cytoplasmic-facing. The chain crosses the membrane as a helical span at residues 387-407 (IFFITFTAYWVLGLPSGYILA). Topologically, residues 408 to 417 (LTDLVVDRMG) are extracellular. The helical transmembrane segment at 418 to 438 (PAGFWMGFIIGLTSAAVLMML) threads the bilayer. Over 439-457 (RMRYLQRQPSAIILQRAAR) the chain is Cytoplasmic.

The protein belongs to the multi antimicrobial extrusion (MATE) (TC 2.A.66.1) family. MdtK subfamily.

It localises to the cell inner membrane. In terms of biological role, multidrug efflux pump that functions probably as a Na(+)/drug antiporter. The chain is Multidrug resistance protein MdtK (mdtK) from Salmonella choleraesuis (strain SC-B67).